Here is a 363-residue protein sequence, read N- to C-terminus: MYIKNLYLDNFRNYDNIEIDFNKKVNILTGNNAQGKTNILESIFYCSLGKSHRTNKDKELIKWDKDEAFIRLNLSRKPLDKKIEIKIFKGGKKGININSIKLKKISELFGIFNVVMFSPEDLKIVKESPGHRRKFLDMEISKLDHRYYYKLVQYNKILDQRNIMLRNKKFLNNDMISVYDEQLSKFGSSLIESRIKYLNKLNEKGKIIHSDITKGKEEIEFTYLTHVKGRENISEELFSLFKDSYKRDVEKGNTSVGPHRDDFSIKINGIDARSFGSQGQQRTSVLTIKFASIQIIKEISSETPVLLLDDVLSELDESRQEYILNSLEGIQTLITCTGIGDIEKYLKNDFNVFRIDNGRIAEY.

Glycine 30–threonine 37 contacts ATP.

The protein belongs to the RecF family.

Its subcellular location is the cytoplasm. In terms of biological role, the RecF protein is involved in DNA metabolism; it is required for DNA replication and normal SOS inducibility. RecF binds preferentially to single-stranded, linear DNA. It also seems to bind ATP. The sequence is that of DNA replication and repair protein RecF from Clostridium acetobutylicum (strain ATCC 824 / DSM 792 / JCM 1419 / IAM 19013 / LMG 5710 / NBRC 13948 / NRRL B-527 / VKM B-1787 / 2291 / W).